Consider the following 255-residue polypeptide: Reaction center protein L chain (255 aa).

Helical transmembrane passes span 12-35 (GFFG…GTAL), 64-92 (GLWQ…RKLG), and 95-120 (LHIP…LLLG). (7R,8Z)-bacteriochlorophyll b contacts are provided by histidine 133 and histidine 153. Residues 150-179 (NPAHMIGITFFFTNCMAFGMHGSIILSVLN) traverse the membrane as a helical segment. Histidine 170 is a Fe cation binding site. A ubiquinone is bound at residue phenylalanine 196. The chain crosses the membrane as a helical span at residues 205–231 (GTLGIHRLGVFLAISAAFWSAVCIILS). Position 210 (histidine 210) interacts with Fe cation.

It belongs to the reaction center PufL/M/PsbA/D family. As to quaternary structure, reaction center is composed of four bacteriochlorophylls, two bacteriopheophytins, two ubiquinones, one iron, and three highly hydrophobic polypeptide chains (designated L, M, and H).

The protein resides in the cellular chromatophore membrane. Its function is as follows. The reaction center is a membrane-bound complex that mediates the initial photochemical event in the electron transfer process of photosynthesis. This is Reaction center protein L chain (pufL) from Pararhodospirillum photometricum (Rhodospirillum photometricum).